A 307-amino-acid polypeptide reads, in one-letter code: Mitochondrial brown fat uncoupling protein 1 (307 aa).

Residues 1–10 (MVSSTTSEVQ) lie on the Mitochondrial intermembrane side of the membrane. A helical transmembrane segment spans residues 11–32 (PTMGVKIFSAGVSACLADIITF). 3 Solcar repeats span residues 11-102 (PTMG…VQEY), 111-201 (ASLG…MKGA), and 210-295 (DDVP…LKKE). Topologically, residues 33–73 (PLDTAKVRLQIQGEGQASSTIRYKGVLGTITTLAKTEGLPK) are mitochondrial matrix. Lys56 lines the fatty acid 16:0 pocket. A helical transmembrane segment spans residues 74-96 (LYSGLPAGIQRQISFASLRIGLY). Residues 97-116 (DTVQEYFSSGRETPASLGSK) are Mitochondrial intermembrane-facing. Residues 117-133 (ISAGLMTGGVAVFIGQP) form a helical membrane-spanning segment. Residues 134–178 (TEVVKVRMQAQSHLHGIKPRYTGTYNAYRVIATTESLSTLWKGTT) are Mitochondrial matrix-facing. Residues 179 to 195 (PNLMRNVIINCTELVTY) traverse the membrane as a helical segment. Residues 196–212 (DLMKGALVNHHILADDV) are Mitochondrial intermembrane-facing. The chain crosses the membrane as a helical span at residues 213–232 (PCHLLSALVAGFCTTLLASP). The Mitochondrial matrix segment spans residues 233–266 (VDVVKTRFINSLPGQYPSVPSCAMTMYTKEGPAA). Cys254 carries the post-translational modification Cysteine sulfenic acid (-SOH). Residues 267-289 (FFKGFAPSFLRLGSWNVIMFVCF) form a helical membrane-spanning segment. A fatty acid 16:0-binding site is contributed by Lys269. Topologically, residues 290–307 (EQLKKELMKSRQTVDCTT) are mitochondrial intermembrane.

Belongs to the mitochondrial carrier (TC 2.A.29) family. In terms of assembly, most probably functions as a monomer. Binds one purine nucleotide per monomer. However, has also been suggested to function as a homodimer or a homotetramer. Tightly associates with cardiolipin in the mitochondrion inner membrane; may stabilize and regulate its activity. In terms of processing, may undergo ubiquitin-mediated proteasomal degradation. May undergo sulfenylation upon cold exposure. May increase the sensitivity of UCP1 thermogenic function to the activation by noradrenaline probably through structural effects. Brown adipose tissue.

It localises to the mitochondrion inner membrane. It catalyses the reaction H(+)(in) = H(+)(out). Has no constitutive proton transporter activity and has to be activated by long-chain fatty acids/LCFAs. Inhibited by purine nucleotides. Both purine nucleotides and LCFAs bind the cytosolic side of the transporter and directly compete to activate or inhibit it. Activated by noradrenaline and reactive oxygen species. Despite lacking canonical translational encoding for selenocysteine, a small pool of the protein has been observed to selectively incorporate selenocysteine at 'Cys-254'. Selenocysteine-modified protein is highly sensitive to redox modification and may constitute a pool of protein highly sensitive to activation by elevated levels of reactive oxygen species (ROS). In terms of biological role, mitochondrial protein responsible for thermogenic respiration, a specialized capacity of brown adipose tissue and beige fat that participates in non-shivering adaptive thermogenesis to temperature and diet variations and more generally to the regulation of energy balance. Functions as a long-chain fatty acid/LCFA and proton symporter, simultaneously transporting one LCFA and one proton through the inner mitochondrial membrane. However, LCFAs remaining associated with the transporter via their hydrophobic tails, it results in an apparent transport of protons activated by LCFAs. Thereby, dissipates the mitochondrial proton gradient and converts the energy of substrate oxydation into heat instead of ATP. Regulates the production of reactive oxygen species/ROS by mitochondria. This is Mitochondrial brown fat uncoupling protein 1 from Rattus norvegicus (Rat).